The chain runs to 458 residues: Light-independent protochlorophyllide reductase subunit N (458 aa).

[4Fe-4S] cluster contacts are provided by Cys20, Cys45, and Cys105.

This sequence belongs to the BchN/ChlN family. In terms of assembly, protochlorophyllide reductase is composed of three subunits; ChlL, ChlN and ChlB. Forms a heterotetramer of two ChlB and two ChlN subunits. [4Fe-4S] cluster serves as cofactor.

It localises to the plastid. The protein localises to the chloroplast. It carries out the reaction chlorophyllide a + oxidized 2[4Fe-4S]-[ferredoxin] + 2 ADP + 2 phosphate = protochlorophyllide a + reduced 2[4Fe-4S]-[ferredoxin] + 2 ATP + 2 H2O. It participates in porphyrin-containing compound metabolism; chlorophyll biosynthesis (light-independent). Functionally, component of the dark-operative protochlorophyllide reductase (DPOR) that uses Mg-ATP and reduced ferredoxin to reduce ring D of protochlorophyllide (Pchlide) to form chlorophyllide a (Chlide). This reaction is light-independent. The NB-protein (ChlN-ChlB) is the catalytic component of the complex. The chain is Light-independent protochlorophyllide reductase subunit N from Angiopteris evecta (Mule's foot fern).